Here is a 113-residue protein sequence, read N- to C-terminus: MDGRVQLIKALLALPIRPQTRRWRNPIPFPETFDGDTDRLPEFIVQTGAYMLVDENLFTNDALKVTFLITRMTGPALQWVIPYIRKQSPLLNDYRGFLAEMKRVFGWVEDEDF.

Belongs to the FAM127 family.

The polypeptide is Retrotransposon Gag-like protein 8 (RTL8A) (Bos taurus (Bovine)).